A 108-amino-acid polypeptide reads, in one-letter code: Nucleoid-associated protein BAV0915 (108 aa).

Belongs to the YbaB/EbfC family. As to quaternary structure, homodimer.

It localises to the cytoplasm. The protein localises to the nucleoid. In terms of biological role, binds to DNA and alters its conformation. May be involved in regulation of gene expression, nucleoid organization and DNA protection. This Bordetella avium (strain 197N) protein is Nucleoid-associated protein BAV0915.